The primary structure comprises 319 residues: D-alanine--D-alanine ligase (319 aa).

Positions 109-313 constitute an ATP-grasp domain; that stretch reads KRVWLAEGLP…YEQLCLHILQ (205 aa). 139–194 serves as a coordination point for ATP; that stretch reads PDDLGLPLIVKPPREGSSIGVTKVLGYSQMQDAVALSARHDPDVLCEEFIDGAEVT. Residues D266, E280, and N282 each coordinate Mg(2+).

This sequence belongs to the D-alanine--D-alanine ligase family. The cofactor is Mg(2+). Mn(2+) is required as a cofactor.

The protein localises to the cytoplasm. It carries out the reaction 2 D-alanine + ATP = D-alanyl-D-alanine + ADP + phosphate + H(+). The protein operates within cell wall biogenesis; peptidoglycan biosynthesis. Its function is as follows. Cell wall formation. This Methylibium petroleiphilum (strain ATCC BAA-1232 / LMG 22953 / PM1) protein is D-alanine--D-alanine ligase.